The following is a 62-amino-acid chain: MIPVRCFSCGKVISNYWDEYKRRVTDGEGSAAVLDDLGITRYCCRRMFLSHVELVDVLSPYQ.

4 residues coordinate Zn(2+): Cys6, Cys9, Cys43, and Cys44.

The protein belongs to the archaeal Rpo10/eukaryotic RPB10 RNA polymerase subunit family. In terms of assembly, part of the RNA polymerase complex. It depends on Zn(2+) as a cofactor.

It is found in the cytoplasm. The catalysed reaction is RNA(n) + a ribonucleoside 5'-triphosphate = RNA(n+1) + diphosphate. DNA-dependent RNA polymerase (RNAP) catalyzes the transcription of DNA into RNA using the four ribonucleoside triphosphates as substrates. The polypeptide is DNA-directed RNA polymerase subunit Rpo10 (Methanosarcina acetivorans (strain ATCC 35395 / DSM 2834 / JCM 12185 / C2A)).